Here is a 207-residue protein sequence, read N- to C-terminus: MARYTGPKAKLSRREGTDLFLKSARRSLADKCKLDSKPGQHGRTSGARTSDYGNQLREKQKVKRIYGVLERQFRRYFAEADRRKGNTGEKLLQLLESRLDNVVYRMGFGSTRAEARQLVSHKAILVNGQTLNVPSAQIKSGDVITIREQSKKQVRIAEALSLAEQSGFPTWVAVDAKKFEGTFKQVPDRADISGDINESLIVELYSR.

The disordered stretch occupies residues 33 to 54; that stretch reads KLDSKPGQHGRTSGARTSDYGN. The span at 42–53 shows a compositional bias: polar residues; sequence GRTSGARTSDYG. The region spanning 97–160 is the S4 RNA-binding domain; it reads SRLDNVVYRM…KKQVRIAEAL (64 aa).

Belongs to the universal ribosomal protein uS4 family. Part of the 30S ribosomal subunit. Contacts protein S5. The interaction surface between S4 and S5 is involved in control of translational fidelity.

One of the primary rRNA binding proteins, it binds directly to 16S rRNA where it nucleates assembly of the body of the 30S subunit. Its function is as follows. With S5 and S12 plays an important role in translational accuracy. In Cupriavidus pinatubonensis (strain JMP 134 / LMG 1197) (Cupriavidus necator (strain JMP 134)), this protein is Small ribosomal subunit protein uS4.